The following is a 272-amino-acid chain: Dermonecrotic toxin SpeSicTox-betaIB1a (272 aa).

H5 is a catalytic residue. Residues E25 and D27 each coordinate Mg(2+). H41 functions as the Nucleophile in the catalytic mechanism. 2 disulfides stabilise this stretch: C45–C51 and C47–C191. D85 provides a ligand contact to Mg(2+).

This sequence belongs to the arthropod phospholipase D family. Class II subfamily. The cofactor is Mg(2+). In terms of tissue distribution, expressed by the venom gland.

Its subcellular location is the secreted. It carries out the reaction an N-(acyl)-sphingosylphosphocholine = an N-(acyl)-sphingosyl-1,3-cyclic phosphate + choline. The enzyme catalyses an N-(acyl)-sphingosylphosphoethanolamine = an N-(acyl)-sphingosyl-1,3-cyclic phosphate + ethanolamine. It catalyses the reaction a 1-acyl-sn-glycero-3-phosphocholine = a 1-acyl-sn-glycero-2,3-cyclic phosphate + choline. The catalysed reaction is a 1-acyl-sn-glycero-3-phosphoethanolamine = a 1-acyl-sn-glycero-2,3-cyclic phosphate + ethanolamine. Dermonecrotic toxins cleave the phosphodiester linkage between the phosphate and headgroup of certain phospholipids (sphingolipid and lysolipid substrates), forming an alcohol (often choline) and a cyclic phosphate. This toxin acts on sphingomyelin (SM). It may also act on ceramide phosphoethanolamine (CPE), lysophosphatidylcholine (LPC) and lysophosphatidylethanolamine (LPE), but not on lysophosphatidylserine (LPS), and lysophosphatidylglycerol (LPG). It acts by transphosphatidylation, releasing exclusively cyclic phosphate products as second products. Induces dermonecrosis, hemolysis, increased vascular permeability, edema, inflammatory response, and platelet aggregation. The polypeptide is Dermonecrotic toxin SpeSicTox-betaIB1a (Sicarius peruensis (Six-eyed sand spider)).